The following is a 110-amino-acid chain: MEVRALLKTVRVSSKKASLVANLFRHQSTANAISILKNTNKKSAPIFLKILNSAISNAVNNHGLDASKLYVSNVMVNEGPTLKRFQPHSQGRATRILKRTSHLSVMVSER.

Belongs to the universal ribosomal protein uL22 family. In terms of assembly, part of the 50S ribosomal subunit.

This protein binds specifically to 23S rRNA; its binding is stimulated by other ribosomal proteins, e.g. L4, L17, and L20. It is important during the early stages of 50S assembly. It makes multiple contacts with different domains of the 23S rRNA in the assembled 50S subunit and ribosome. In terms of biological role, the globular domain of the protein is located near the polypeptide exit tunnel on the outside of the subunit, while an extended beta-hairpin is found that lines the wall of the exit tunnel in the center of the 70S ribosome. In Mycoplasmopsis pulmonis (strain UAB CTIP) (Mycoplasma pulmonis), this protein is Large ribosomal subunit protein uL22.